Reading from the N-terminus, the 386-residue chain is Patatin-15 (386 aa).

Positions 1 to 23 (MATTKSFLILFFMILATTSSTCA) are cleaved as a signal peptide. The PNPLA domain maps to 32-229 (LSIDGGGIKG…TVGDPALLSL (198 aa)). A GXGXXG motif is present at residues 36–41 (GGGIKG). The GXSXG signature appears at 75 to 79 (GTSTG). Catalysis depends on Ser77, which acts as the Nucleophile. Asn115 carries an N-linked (GlcNAc...) asparagine glycan. Catalysis depends on Asp215, which acts as the Proton acceptor. The short motif at 215–217 (DGG) is the DGA/G element. The stretch at 321–384 (ENALTGTTTE…DRKKLRANKA (64 aa)) forms a coiled coil.

Belongs to the patatin family. As to expression, tuber.

The protein resides in the vacuole. Probable lipolytic acyl hydrolase (LAH), an activity which is thought to be involved in the response of tubers to pathogens. This chain is Patatin-15, found in Solanum tuberosum (Potato).